We begin with the raw amino-acid sequence, 193 residues long: NADH-quinone oxidoreductase subunit B (193 aa).

A disordered region spans residues 1–25; it reads MGLNDSSGTLVAPKPKGIIDPNTGR. Cysteine 72, cysteine 73, cysteine 137, and cysteine 167 together coordinate [4Fe-4S] cluster.

This sequence belongs to the complex I 20 kDa subunit family. In terms of assembly, NDH-1 is composed of 14 different subunits. Subunits NuoB, C, D, E, F, and G constitute the peripheral sector of the complex. It depends on [4Fe-4S] cluster as a cofactor.

The protein localises to the cell inner membrane. It catalyses the reaction a quinone + NADH + 5 H(+)(in) = a quinol + NAD(+) + 4 H(+)(out). NDH-1 shuttles electrons from NADH, via FMN and iron-sulfur (Fe-S) centers, to quinones in the respiratory chain. Couples the redox reaction to proton translocation (for every two electrons transferred, four hydrogen ions are translocated across the cytoplasmic membrane), and thus conserves the redox energy in a proton gradient. The polypeptide is NADH-quinone oxidoreductase subunit B (Mesorhizobium japonicum (strain LMG 29417 / CECT 9101 / MAFF 303099) (Mesorhizobium loti (strain MAFF 303099))).